A 333-amino-acid chain; its full sequence is Galactinol synthase 1 (333 aa).

Lysine 104 is an active-site residue. Residues aspartate 120, aspartate 122, and histidine 257 each coordinate Mn(2+).

The protein belongs to the glycosyltransferase 8 family. Galactosyltransferase subfamily. A divalent metal cation is required as a cofactor. As to expression, expressed in source leaves, specifically in the mesophyll.

It localises to the cytoplasm. It carries out the reaction myo-inositol + UDP-alpha-D-galactose = alpha-D-galactosyl-(1-&gt;3)-1D-myo-inositol + UDP + H(+). Functionally, major galactinol synthase mainly involved in the biosynthesis of storage raffinose family oligosaccharides (RFOs) that function as osmoprotectants. May promote plant stress tolerance. The polypeptide is Galactinol synthase 1 (GOLS1) (Ajuga reptans (Bugle)).